The following is a 448-amino-acid chain: Chromosomal replication initiator protein DnaA 1 (448 aa).

The domain I, interacts with DnaA modulators stretch occupies residues M1–P76. The tract at residues P76–V111 is domain II. Residues K112–C328 are domain III, AAA+ region. Residues G156, G158, K159, and T160 each contribute to the ATP site. Residues R329–S448 form a domain IV, binds dsDNA region.

The protein belongs to the DnaA family. In terms of assembly, oligomerizes as a right-handed, spiral filament on DNA at oriC.

The protein localises to the cytoplasm. Plays an essential role in the initiation and regulation of chromosomal replication. ATP-DnaA binds to the origin of replication (oriC) to initiate formation of the DNA replication initiation complex once per cell cycle. Binds the DnaA box (a 9 base pair repeat at the origin) and separates the double-stranded (ds)DNA. Forms a right-handed helical filament on oriC DNA; dsDNA binds to the exterior of the filament while single-stranded (ss)DNA is stabiized in the filament's interior. The ATP-DnaA-oriC complex binds and stabilizes one strand of the AT-rich DNA unwinding element (DUE), permitting loading of DNA polymerase. After initiation quickly degrades to an ADP-DnaA complex that is not apt for DNA replication. Binds acidic phospholipids. In Protochlamydia amoebophila (strain UWE25), this protein is Chromosomal replication initiator protein DnaA 1.